Consider the following 452-residue polypeptide: F-box only protein 47 (452 aa).

Residues 41-91 enclose the F-box domain; it reads FGNFKALPLEIFQIILKYLSVKDISMLSMVSKTVSQHIINYISTSSGSKRL.

Part of a SCF (SKP1-cullin-F-box) protein ligase complex. In terms of tissue distribution, widely expressed, with highest levels in kidney, liver and pancreas. Down-regulated in tumors.

Its function is as follows. Probably recognizes and binds to some phosphorylated proteins and promotes their ubiquitination and degradation. The sequence is that of F-box only protein 47 from Homo sapiens (Human).